We begin with the raw amino-acid sequence, 1113 residues long: Carbamoyl phosphate synthase arginine-specific large chain (1113 aa).

Residues 23 to 420 (QLIKGIDSVL…AFQKAFRQVD (398 aa)) are carboxyphosphate synthetic domain. ATP contacts are provided by arginine 150, arginine 190, glycine 196, glycine 197, lysine 227, leucine 229, glutamate 234, glycine 260, isoleucine 261, histidine 262, glutamine 303, and glutamate 317. The 193-residue stretch at 154–346 (ARALKEINMP…LAYTAAKIAL (193 aa)) folds into the ATP-grasp 1 domain. Positions 303, 317, and 319 each coordinate Mg(2+). Mn(2+) is bound by residues glutamine 303, glutamate 317, and asparagine 319. Residues 421–568 (PSLLGFQGSD…YVTYNAVKDD (148 aa)) form an oligomerization domain region. The tract at residues 569–955 (VTFGDNGIMV…SYWVALQGLM (387 aa)) is carbamoyl phosphate synthetic domain. The region spanning 693-888 (STILDTLGLD…FVEIAVKAFL (196 aa)) is the ATP-grasp 2 domain. ATP-binding residues include arginine 729, lysine 768, isoleucine 770, glutamate 775, glycine 800, valine 801, histidine 802, serine 803, glutamine 843, and glutamate 859. Residues glutamine 843, glutamate 859, and asparagine 861 each coordinate Mg(2+). Mn(2+)-binding residues include glutamine 843, glutamate 859, and asparagine 861. The segment at 956-1097 (SFCVPLPPSG…EMRQSDGPET (142 aa)) is allosteric domain. The MGS-like domain occupies 957 to 1113 (FCVPLPPSGI…WREYLGFKPT (157 aa)).

The protein belongs to the CarB family. In terms of assembly, heterodimer composed of 2 chains; the small (or glutamine) chain promotes the hydrolysis of glutamine to ammonia, which is used by the large (or ammonia) chain to synthesize carbamoyl phosphate. Mg(2+) is required as a cofactor. Requires Mn(2+) as cofactor.

The protein resides in the cytoplasm. The catalysed reaction is hydrogencarbonate + L-glutamine + 2 ATP + H2O = carbamoyl phosphate + L-glutamate + 2 ADP + phosphate + 2 H(+). The enzyme catalyses hydrogencarbonate + NH4(+) + 2 ATP = carbamoyl phosphate + 2 ADP + phosphate + 2 H(+). It functions in the pathway amino-acid biosynthesis; L-arginine biosynthesis; carbamoyl phosphate from bicarbonate: step 1/1. Its function is as follows. Large subunit of the arginine-specific carbamoyl phosphate synthase (CPSase). CPSase catalyzes the formation of carbamoyl phosphate from the ammonia moiety of glutamine, hydrogencarbonate, and phosphate donated by ATP, constituting the first step of 2 biosynthetic pathways, one leading to arginine and/or urea and the other to pyrimidine nucleotides. The large subunit (synthetase) binds the substrates ammonia (free or transferred from glutamine from the small subunit), hydrogencarbonate and ATP and carries out an ATP-coupled ligase reaction, activating hydrogencarbonate by forming carboxy phosphate which reacts with ammonia to form carbamoyl phosphate. The polypeptide is Carbamoyl phosphate synthase arginine-specific large chain (CPA2) (Eremothecium gossypii (strain ATCC 10895 / CBS 109.51 / FGSC 9923 / NRRL Y-1056) (Yeast)).